The primary structure comprises 276 residues: Probable NADH-ubiquinone oxidoreductase 30.4 kDa subunit, mitochondrial (276 aa).

Residues 248–276 (EPVGEGKDFTPESFKLPTPQPEPEQEEKK) form a disordered region.

The protein belongs to the complex I 30 kDa subunit family. Complex I is composed of about 30 different subunits. This is a component of the iron-sulfur protein fraction.

The protein localises to the mitochondrion inner membrane. The enzyme catalyses a ubiquinone + NADH + 5 H(+)(in) = a ubiquinol + NAD(+) + 4 H(+)(out). Its function is as follows. Core subunit of the mitochondrial membrane respiratory chain NADH dehydrogenase (Complex I) that is believed to belong to the minimal assembly required for catalysis. Complex I functions in the transfer of electrons from NADH to the respiratory chain. The immediate electron acceptor for the enzyme is believed to be ubiquinone. Essential for N-alkane assimilation. The chain is Probable NADH-ubiquinone oxidoreductase 30.4 kDa subunit, mitochondrial (ALI1) from Candida maltosa (Yeast).